The following is a 453-amino-acid chain: MDQTMTQASDKEASVADKLQYMPGFGNDFETETLPGALPQGQNSPQKCNYGLYAEQLSGSPFTAPRGTNERSWLYRIRPSVRHTRRFSNASYPHWKSAPCLDDHSLPLGQLRWGPMPVPDEKLSFLDGVRTMTTAGDVLTQTGMAAHVYVFNEDMVDDYAFNADGELLIVPQVGAIRVFTEMGIMDVEPLEIVLIPRGMMFKVLRKGDEKVWRGYICENYGAKFTLPDRGPIGANCLANPRDFKTPVAAYEDKEAPCRVHVKWCGKFYVTEIGHSPLDVVAWHGNYAPFKYDLRTFSPVGAILFDHPDPSIFTVLTAPTESAGTANVDFVIFPPRWLVAEHTFRPPWYHRNIMSEFMGLIHGQYDAKEEGFVPGGISLHNMMLPHGPDASGFEKASNSELKPVKLDHTMAFMFETRYPQQVTKYAAELETLQDNYLECWDGLERRFDGTPGIK.

Histidine 306 serves as the catalytic Proton acceptor. 2 residues coordinate Fe cation: histidine 349 and glutamate 355. Homogentisate-binding residues include tyrosine 364 and histidine 385. Position 385 (histidine 385) interacts with Fe cation.

Belongs to the homogentisate dioxygenase family. Hexamer; dimer of trimers. The cofactor is Fe cation.

The catalysed reaction is homogentisate + O2 = 4-maleylacetoacetate + H(+). Its pathway is amino-acid degradation; L-phenylalanine degradation; acetoacetate and fumarate from L-phenylalanine: step 4/6. In terms of biological role, involved in the catabolism of homogentisate (2,5-dihydroxyphenylacetate or 2,5-OH-PhAc), a central intermediate in the degradation of phenylalanine and tyrosine. Catalyzes the oxidative ring cleavage of the aromatic ring of homogentisate to yield maleylacetoacetate. The polypeptide is Homogentisate 1,2-dioxygenase (Rhizobium rhizogenes (strain K84 / ATCC BAA-868) (Agrobacterium radiobacter)).